The chain runs to 376 residues: Erythronate-4-phosphate dehydrogenase (376 aa).

Ser45 and Thr67 together coordinate substrate. Residues 127 to 128, Asp147, and Thr176 each bind NAD(+); that span reads QV. The active site involves Arg209. NAD(+) is bound at residue Asp233. Residue Glu238 is part of the active site. His255 functions as the Proton donor in the catalytic mechanism. Residue Gly258 participates in NAD(+) binding. Tyr259 lines the substrate pocket.

This sequence belongs to the D-isomer specific 2-hydroxyacid dehydrogenase family. PdxB subfamily. As to quaternary structure, homodimer.

The protein localises to the cytoplasm. It carries out the reaction 4-phospho-D-erythronate + NAD(+) = (R)-3-hydroxy-2-oxo-4-phosphooxybutanoate + NADH + H(+). It participates in cofactor biosynthesis; pyridoxine 5'-phosphate biosynthesis; pyridoxine 5'-phosphate from D-erythrose 4-phosphate: step 2/5. Catalyzes the oxidation of erythronate-4-phosphate to 3-hydroxy-2-oxo-4-phosphonooxybutanoate. This Aliivibrio fischeri (strain ATCC 700601 / ES114) (Vibrio fischeri) protein is Erythronate-4-phosphate dehydrogenase.